Reading from the N-terminus, the 77-residue chain is Exodeoxyribonuclease 7 small subunit (77 aa).

It belongs to the XseB family. Heterooligomer composed of large and small subunits.

The protein localises to the cytoplasm. It carries out the reaction Exonucleolytic cleavage in either 5'- to 3'- or 3'- to 5'-direction to yield nucleoside 5'-phosphates.. Functionally, bidirectionally degrades single-stranded DNA into large acid-insoluble oligonucleotides, which are then degraded further into small acid-soluble oligonucleotides. This Carboxydothermus hydrogenoformans (strain ATCC BAA-161 / DSM 6008 / Z-2901) protein is Exodeoxyribonuclease 7 small subunit.